We begin with the raw amino-acid sequence, 169 residues long: Probable actin-related protein 2/3 complex subunit 4 (169 aa).

It belongs to the ARPC4 family. Component of the Arp2/3 complex, at least composed of arx-1, arx-2, arx-4 and arx-6.

Its subcellular location is the cytoplasm. The protein resides in the cytoskeleton. Functions as actin-binding component of the Arp2/3 complex which is involved in regulation of actin polymerization and together with an activating nucleation-promoting factor (NPF) mediates the formation of branched actin networks. Seems to contact the mother actin filament. Plays a role in time-dependent memory loss and the retention of conditioned behavior over time. In Caenorhabditis elegans, this protein is Probable actin-related protein 2/3 complex subunit 4.